The chain runs to 679 residues: Glycine--tRNA ligase beta subunit (679 aa).

It belongs to the class-II aminoacyl-tRNA synthetase family. Tetramer of two alpha and two beta subunits.

It is found in the cytoplasm. It carries out the reaction tRNA(Gly) + glycine + ATP = glycyl-tRNA(Gly) + AMP + diphosphate. This Streptococcus pyogenes serotype M49 (strain NZ131) protein is Glycine--tRNA ligase beta subunit.